The sequence spans 368 residues: Germination protease (368 aa).

Positions 1–15 are excised as a propeptide; that stretch reads MKEPLDLSKYSVRTD.

The protein belongs to the peptidase A25 family. Homotetramer. Autoproteolytically processed. The inactive tetrameric zymogen termed p46 autoprocesses to a smaller form termed p41, which is active only during spore germination.

The enzyme catalyses Endopeptidase action with P4 Glu or Asp, P1 preferably Glu &gt; Asp, P1' hydrophobic and P2' Ala.. Initiates the rapid degradation of small, acid-soluble proteins during spore germination. This Bacillus anthracis (strain A0248) protein is Germination protease.